Here is a 202-residue protein sequence, read N- to C-terminus: Probable WRKY transcription factor 59 (202 aa).

Positions 103-168 (DEKVALDDGY…YEGRHNHPSP (66 aa)) form a DNA-binding region, WRKY.

The protein belongs to the WRKY group II-c family.

It localises to the nucleus. In terms of biological role, transcription factor. Interacts specifically with the W box (5'-(T)TGAC[CT]-3'), a frequently occurring elicitor-responsive cis-acting element. In Arabidopsis thaliana (Mouse-ear cress), this protein is Probable WRKY transcription factor 59 (WRKY59).